The primary structure comprises 392 residues: S-adenosylmethionine synthase (392 aa).

Residue His-20 coordinates ATP. Asp-22 contributes to the Mg(2+) binding site. Glu-48 is a K(+) binding site. Residues Glu-61 and Gln-106 each coordinate L-methionine. Residues 106–116 (QSQDIINAIKK) form a flexible loop region. ATP is bound by residues 171-173 (DSK), Asp-248, 254-255 (RK), Ala-271, and Lys-275. An L-methionine-binding site is contributed by Asp-248. Lys-279 lines the L-methionine pocket.

The protein belongs to the AdoMet synthase family. As to quaternary structure, homotetramer; dimer of dimers. Requires Mg(2+) as cofactor. K(+) is required as a cofactor.

The protein localises to the cytoplasm. It catalyses the reaction L-methionine + ATP + H2O = S-adenosyl-L-methionine + phosphate + diphosphate. The protein operates within amino-acid biosynthesis; S-adenosyl-L-methionine biosynthesis; S-adenosyl-L-methionine from L-methionine: step 1/1. Its function is as follows. Catalyzes the formation of S-adenosylmethionine (AdoMet) from methionine and ATP. The overall synthetic reaction is composed of two sequential steps, AdoMet formation and the subsequent tripolyphosphate hydrolysis which occurs prior to release of AdoMet from the enzyme. The polypeptide is S-adenosylmethionine synthase (Borrelia garinii subsp. bavariensis (strain ATCC BAA-2496 / DSM 23469 / PBi) (Borreliella bavariensis)).